Consider the following 266-residue polypeptide: MVKVTFNSALAQKEAKKDEPKSSEEALIVPPDAVAVDCKDPGDVVPVGQRRAWCWCMCFGLAFMLAGVILGGAYLYKYFALQPDDVYYCGLKYIKDDVILNEPSADAPAARYQTIEENIKIFEEDAVEFISVPVPEFADSDPANIVHDFNKKLTAYLDLNLDKCYVIPLNTSIVMPPKNLLELLINIKAGTYLPQSYLIHEHMVITDRIENVDNLGFFIYRLCHDKETYKLQRRETIRGIQKREASNCFTIRHFENKFAVETLICS.

Residues 1–54 (MVKVTFNSALAQKEAKKDEPKSSEEALIVPPDAVAVDCKDPGDVVPVGQRRAWC) are Cytoplasmic-facing. A helical; Signal-anchor for type II membrane protein transmembrane segment spans residues 55 to 75 (WCMCFGLAFMLAGVILGGAYL). Over 76–266 (YKYFALQPDD…KFAVETLICS (191 aa)) the chain is Lumenal. The segment at 102 to 134 (EPSADAPAARYQTIEENIKIFEEDAVEFISVPV) is necessary for interaction with APP and inhibitor effects on APP processing. One can recognise a BRICHOS domain in the interval 137–231 (FADSDPANIV…LCHDKETYKL (95 aa)). 2 disulfide bridges follow: C164/C223 and C248/C265. Residue N170 is glycosylated (N-linked (GlcNAc...) asparagine).

This sequence belongs to the ITM2 family. Homodimer; disulfide-linked. Interacts with SPPL2A and SPPL2B. Interacts with APP. Mature BRI2 (mBRI2) interacts with the APP amyloid-beta A4 protein; the interaction occurs at the cell surface and in the endocytic compartments and enable alpha- and beta-secretase-induced APP cleavage inhibition. Mature BRI2 (mBRI2) interacts with the APP C99; the interaction occurs in the endocytic compartments and enable gamma-secretase-induced C99 cleavage inhibition. May form heterodimers with Bri23 peptide and APP amyloid-beta protein 40. Interacts with ADAM7 in sperm; the interaction increases following capacitation. The ectodomain C-terminal part of the imBRI2 is processed by furin producing a secreted Bri23 peptide and a mature BRI2, membrane form (mBRI2). The remaining part of the ectodomain of mBRI2 containing the BRICHOS domain is cleaved by ADAM10 and is secreted (BRI2C, soluble form). The membrane-bound N-terminal fragment (BRI2C, membrane form) is further proteolytically processed by SPPL2A and SPPL2B through regulated intramembrane proteolysis producing a secreted C-peptide and a BRI2 intracellular domain (BRI2 ICD) released in the cytosol. Shedding by ADAM10 facilitates intramembrane cleavage but is not absolutely required for BRI2 ICD generation. Post-translationally, glycosylation at Asn-170 is important for cell surface localization, but doesn't affect furin- and ADAM10-induced proteolytic processing. Expressed in the brain, testis, testicular sperm, epididymis and mature epididymal sperm (at protein level).

Its subcellular location is the golgi apparatus membrane. The protein localises to the cell membrane. The protein resides in the endosome membrane. It is found in the secreted. In terms of biological role, plays a regulatory role in the processing of the amyloid-beta A4 precursor protein (APP) and acts as an inhibitor of the amyloid-beta peptide aggregation and fibrils deposition. Plays a role in the induction of neurite outgrowth. Functions as a protease inhibitor by blocking access of secretases to APP cleavage sites. Functionally, mature BRI2 (mBRI2) functions as a modulator of the amyloid-beta A4 precursor protein (APP) processing leading to a strong reduction in the secretion of secretase-processed amyloid-beta protein 40 and amyloid-beta protein 42. Its function is as follows. Bri23 peptide prevents aggregation of APP amyloid-beta protein 42 into toxic oligomers. This chain is Integral membrane protein 2B (Itm2b), found in Mus musculus (Mouse).